Consider the following 550-residue polypeptide: 4-coumarate--CoA ligase-like 8 (550 aa).

Residues Ser207, Ser208, Gly209, Thr210, Thr211, and Lys215 each coordinate ATP. Phe253 serves as a coordination point for (E)-4-coumaroyl-AMP. Residue Arg274 coordinates CoA. An SBD1 region spans residues 276 to 347 (DLGEMMAAVE…KKYPTVDVYQ (72 aa)). (E)-4-coumaroyl-AMP contacts are provided by Gly325, Gln347, Gly348, and Thr352. ATP-binding residues include Gln347, Gly348, Thr352, Asp430, and Arg445. Positions 348–412 (GYALTESNGA…LKGPSIAKGY (65 aa)) are SBD2. Residues Lys447 and Lys451 each coordinate (E)-4-coumaroyl-AMP. 2 residues coordinate CoA: Lys453 and Gly454. Lys536 serves as a coordination point for ATP. The Microbody targeting signal motif lies at 548 to 550 (SKI).

It belongs to the ATP-dependent AMP-binding enzyme family. Mg(2+) is required as a cofactor.

It localises to the peroxisome. It catalyses the reaction (E)-4-coumarate + ATP + CoA = (E)-4-coumaroyl-CoA + AMP + diphosphate. The enzyme catalyses (E)-4-coumarate + ATP + H(+) = (E)-4-coumaroyl-AMP + diphosphate. The catalysed reaction is (E)-4-coumaroyl-AMP + CoA = (E)-4-coumaroyl-CoA + AMP + H(+). Carboxylate--CoA ligase that may use 4-coumarate as substrate. Follows a two-step reaction mechanism, wherein the carboxylate substrate first undergoes adenylation by ATP, followed by a thioesterification in the presence of CoA to yield the final CoA thioester. This chain is 4-coumarate--CoA ligase-like 8, found in Arabidopsis thaliana (Mouse-ear cress).